Here is a 100-residue protein sequence, read N- to C-terminus: Urease subunit gamma (100 aa).

Belongs to the urease gamma subunit family. In terms of assembly, heterotrimer of UreA (gamma), UreB (beta) and UreC (alpha) subunits. Three heterotrimers associate to form the active enzyme.

It localises to the cytoplasm. It carries out the reaction urea + 2 H2O + H(+) = hydrogencarbonate + 2 NH4(+). The protein operates within nitrogen metabolism; urea degradation; CO(2) and NH(3) from urea (urease route): step 1/1. This chain is Urease subunit gamma, found in Laribacter hongkongensis (strain HLHK9).